We begin with the raw amino-acid sequence, 350 residues long: Dihydroorotase (350 aa).

2 residues coordinate Zn(2+): H17 and H19. Residues H19–R21 and N45 contribute to the substrate site. Positions 103, 140, and 178 each coordinate Zn(2+). An N6-carboxylysine modification is found at K103. A substrate-binding site is contributed by H140. L224 contributes to the substrate binding site. Position 252 (D252) interacts with Zn(2+). D252 is an active-site residue. Positions 256 and 268 each coordinate substrate.

Belongs to the metallo-dependent hydrolases superfamily. DHOase family. Class II DHOase subfamily. As to quaternary structure, homodimer. Zn(2+) is required as a cofactor.

It carries out the reaction (S)-dihydroorotate + H2O = N-carbamoyl-L-aspartate + H(+). Its pathway is pyrimidine metabolism; UMP biosynthesis via de novo pathway; (S)-dihydroorotate from bicarbonate: step 3/3. Catalyzes the reversible cyclization of carbamoyl aspartate to dihydroorotate. The sequence is that of Dihydroorotase from Buchnera aphidicola subsp. Acyrthosiphon pisum (strain 5A).